Reading from the N-terminus, the 354-residue chain is L-lactate dehydrogenase (354 aa).

NAD(+) contacts are provided by residues 73–78 (DAVPDK) and Arg-120. Substrate is bound by residues Arg-127, Asn-159, and Arg-190. Residue Asn-159 coordinates NAD(+). The active-site Proton acceptor is the His-214. Thr-269 contributes to the substrate binding site. Residues 302-332 (HGIPDGTTSSSACPPRRPRRRPGRREMELTE) form a disordered region.

This sequence belongs to the LDH/MDH superfamily. LDH family. Homotetramer.

It carries out the reaction (S)-lactate + NAD(+) = pyruvate + NADH + H(+). The protein operates within fermentation; pyruvate fermentation to lactate; (S)-lactate from pyruvate: step 1/1. The chain is L-lactate dehydrogenase from Zea mays (Maize).